Here is a 406-residue protein sequence, read N- to C-terminus: Serine/threonine transporter SstT (406 aa).

The next 9 helical transmembrane spans lie at 11–31, 45–65, 79–99, 141–161, 185–205, 216–236, 298–318, 330–350, and 357–377; these read IGLVPLIIVGLVLGILIGWLM, FVGALKAVAPILVFILVMAAI, VLIMYIFGTFLAALTAVVASF, AIANANYMGILAWALIIGLAL, FVIAFAPIGILGLVANTIAET, LLTILVGCMLFIALVVNPIIV, MAGAAITINVLTLAAAHTLGV, VVATVAACGASGVAGGSLLLI, and FNIPNDIAMQVVAIGFIIGVV.

It belongs to the dicarboxylate/amino acid:cation symporter (DAACS) (TC 2.A.23) family.

It localises to the cell inner membrane. It catalyses the reaction L-serine(in) + Na(+)(in) = L-serine(out) + Na(+)(out). It carries out the reaction L-threonine(in) + Na(+)(in) = L-threonine(out) + Na(+)(out). Functionally, involved in the import of serine and threonine into the cell, with the concomitant import of sodium (symport system). This chain is Serine/threonine transporter SstT, found in Psychrobacter sp. (strain PRwf-1).